The chain runs to 906 residues: Coatomer subunit beta' (906 aa).

WD repeat units lie at residues 13-52 (ARSDRVKSVDLHPTEPWMLASLYNGSVCVWNHETQTLVKT), 55-94 (VCDLPVRAAKFVARKNWVVTGADDMQIRVFNYNTLERVHM), 97-136 (AHSDYIRCIAVHPTQPFILTSSDDMLIKLWDWDKKWSCSQ), 140-180 (GHTH…PNFT), 183-224 (GHEK…CVQT), 227-266 (GHAQNVSCASFHPELPIIITGSEDGTVRIWHSSTYRLEST), 350-388 (SCEIYPQTIQHNPNGRFVVVCGDGEYIIYTAMALRNKSF), and 390-425 (SAQEFAWAHDSSEYAIRESNSVVKIFKNFKEKKSFK). Lys627 is subject to N6-acetyllysine. A WD 9 repeat occupies 746–783 (IRTGRLPEAAFLARTYLPSQVSRVVKLWRENLSKVNQK). The tract at residues 837 to 862 (EEAKGFQPSRSTAQQELDGKPASPTP) is disordered. Ser859 is subject to Phosphoserine. Thr861 is modified (phosphothreonine). The stretch at 866 to 890 (ASHTANKEEKSLLELEVDLDNLELE) forms a coiled coil.

This sequence belongs to the WD repeat COPB2 family. In terms of assembly, oligomeric complex that consists of at least the alpha, beta, beta', gamma, delta, epsilon and zeta subunits. Probably interacts with PEX11A. Interacts with SCYL1. Interacts with JAGN1.

The protein resides in the cytoplasm. It is found in the cytosol. It localises to the golgi apparatus membrane. The protein localises to the cytoplasmic vesicle. Its subcellular location is the COPI-coated vesicle membrane. Its function is as follows. The coatomer is a cytosolic protein complex that binds to dilysine motifs and reversibly associates with Golgi non-clathrin-coated vesicles, which further mediate biosynthetic protein transport from the ER, via the Golgi up to the trans Golgi network. Coatomer complex is required for budding from Golgi membranes, and is essential for the retrograde Golgi-to-ER transport of dilysine-tagged proteins. In mammals, the coatomer can only be recruited by membranes associated to ADP-ribosylation factors (ARFs), which are small GTP-binding proteins; the complex also influences the Golgi structural integrity, as well as the processing, activity, and endocytic recycling of LDL receptors. Functionally, this coatomer complex protein, essential for Golgi budding and vesicular trafficking, is a selective binding protein (RACK) for protein kinase C, epsilon type. It binds to Golgi membranes in a GTP-dependent manner. The protein is Coatomer subunit beta' (COPB2) of Macaca fascicularis (Crab-eating macaque).